Here is a 62-residue protein sequence, read N- to C-terminus: Metallothionein-4 (62 aa).

Residues cysteine 6, cysteine 8, cysteine 14, cysteine 16, cysteine 20, cysteine 22, cysteine 25, cysteine 27, cysteine 30, cysteine 34, cysteine 35, cysteine 37, cysteine 38, cysteine 42, cysteine 45, cysteine 49, cysteine 51, cysteine 58, cysteine 60, and cysteine 61 each contribute to the a divalent metal cation site.

This sequence belongs to the metallothionein superfamily. Type 1 family.

Seems to bind zinc and copper. Could play a special role in regulating zinc metabolism during the differentiation of stratified epithelia. The chain is Metallothionein-4 (MT4) from Canis lupus familiaris (Dog).